The following is a 728-amino-acid chain: Microtubule-associated protein VP5 (728 aa).

The protein belongs to the reoviridae microtubule-associated protein family.

It is found in the virion. It localises to the host cytoplasm. The protein localises to the host cytoskeleton. Its function is as follows. Minor inner capsid component. Displays NTPase and RNA 5'-triphosphatase (RTPase) activities. May function as a cofactor of polymerase. Associates with microtubules and plays a role in the formation, structural organization and morphology of viral inclusions, where the assembly of cores and the replication of viral RNA occur. The chain is Microtubule-associated protein VP5 (S5) from Aquareovirus C (isolate Golden shiner/USA/GSRV/1977) (AQRV-C).